Here is a 184-residue protein sequence, read N- to C-terminus: Isopentenyl-diphosphate Delta-isomerase (184 aa).

2 residues coordinate Mn(2+): His25 and His32. In terms of domain architecture, Nudix hydrolase spans 30–164; it reads PLHLAFSCWL…PWAFSPWMVL (135 aa). Cys67 is an active-site residue. Position 69 (His69) interacts with Mn(2+). A Mg(2+)-binding site is contributed by Glu87. Positions 114 and 116 each coordinate Mn(2+). Glu116 is an active-site residue.

The protein belongs to the IPP isomerase type 1 family. In terms of assembly, homodimer. Requires Mg(2+) as cofactor. Mn(2+) serves as cofactor.

Its subcellular location is the cytoplasm. The catalysed reaction is isopentenyl diphosphate = dimethylallyl diphosphate. The protein operates within isoprenoid biosynthesis; dimethylallyl diphosphate biosynthesis; dimethylallyl diphosphate from isopentenyl diphosphate: step 1/1. Functionally, catalyzes the 1,3-allylic rearrangement of the homoallylic substrate isopentenyl (IPP) to its highly electrophilic allylic isomer, dimethylallyl diphosphate (DMAPP). This chain is Isopentenyl-diphosphate Delta-isomerase, found in Klebsiella pneumoniae subsp. pneumoniae (strain ATCC 700721 / MGH 78578).